We begin with the raw amino-acid sequence, 465 residues long: Branched-chain amino acid permease BcaP (465 aa).

The next 12 helical transmembrane spans lie at 28–48, 56–76, 88–110, 149–169, 181–201, 219–239, 259–279, 309–329, 359–379, 380–400, 416–436, and 438–458; these read FLAL…PGQV, GVVF…LAYA, AYSW…ALLA, DGGI…IIVF, ILVV…ITVI, FGGF…YIGF, GIIG…LVLV, VVTA…VLAG, VWTL…AFLA, QLIS…IYSL, PFYP…FWGL, and VQAK…YFAY.

The protein belongs to the amino acid-polyamine-organocation (APC) superfamily.

It is found in the cell membrane. In terms of biological role, branched-chain amino acid transport system that specifically transports branched-chain amino acids (BCAAs) (isoleucine, leucine and valine) and, to a lesser extent, methionine. Important for CodY-mediated regulation, and required for optimal growth in media containing free amino acids as the only amino acid source. In Lactococcus lactis subsp. cremoris (strain MG1363), this protein is Branched-chain amino acid permease BcaP.